The primary structure comprises 357 residues: MSLSRLLIKDFRNIENADLALSPGFNFLVGANGSGKTSVLEAIYTLGHGRAFRSLQIGRVIRHEQEAFVLHGRLQGEERETSIGLTKDKQGDSKVRIDGTDGHKVAELAHLMPMQLITPEGFTLLNGGPKYRRAFLDWGCFHNEAGFFTAWSNLKRLLKQRNAALRQVSRYEQLRPWDKELIPLAEQISTWRAEYSSAIAQDMADTCQQFLPEFSLTFSFQRGWEKETDYADVLERSFERDRILTYTAHGPHKADFRIRADGAPVEDTLSRGQLKLLMCALRLAQGEFLTRESGRRCLYLIDDFASELDDARRGLLASRLKATQSQVFVSAISAEHVLDMSDKNSKMFSVEKGKITD.

30-37 is an ATP binding site; it reads GANGSGKT.

The protein belongs to the RecF family.

The protein resides in the cytoplasm. In terms of biological role, the RecF protein is involved in DNA metabolism; it is required for DNA replication and normal SOS inducibility. RecF binds preferentially to single-stranded, linear DNA. It also seems to bind ATP. The chain is DNA replication and repair protein RecF from Salmonella arizonae (strain ATCC BAA-731 / CDC346-86 / RSK2980).